We begin with the raw amino-acid sequence, 450 residues long: Tripartite motif-containing protein 77 (450 aa).

Residues 15–56 (CSICTDYLTDPVTICCGHRFCSPCLCLLWEDTLTPNCCPVCR) form an RING-type zinc finger. The B box-type zinc finger occupies 88–131 (SAMLICRRHQEIKNLICETDRSLLCFLCSQSPRHATHKHYMTRE). Zn(2+) contacts are provided by cysteine 93, histidine 96, cysteine 115, and histidine 121. Positions 269–450 (QLSAWTITGV…LRPFICHGSK (182 aa)) constitute a B30.2/SPRY domain.

Belongs to the TRIM/RBCC family.

This Homo sapiens (Human) protein is Tripartite motif-containing protein 77 (TRIM77).